Reading from the N-terminus, the 274-residue chain is Proteasome subunit beta type-5-A (274 aa).

The propeptide at 1–57 (MKLDTSGFETSMPMIGFGSSSDMLDELSSVPSFDLPRTKEFDGFQKKAKDMLKHAKG) is removed in mature form. Catalysis depends on threonine 58, which acts as the Nucleophile.

It belongs to the peptidase T1B family. In terms of assembly, component of the 20S core complex of the 26S proteasome. The 26S proteasome is composed of a core protease (CP), known as the 20S proteasome, capped at one or both ends by the 19S regulatory particle (RP/PA700). The 20S proteasome core is composed of 28 subunits that are arranged in four stacked rings, resulting in a barrel-shaped structure. The two end rings are each formed by seven alpha subunits, and the two central rings are each formed by seven beta subunits. The catalytic chamber with the active sites is on the inside of the barrel. Ubiquitous low levels, higher expression in siliques and flowers.

It is found in the cytoplasm. It localises to the nucleus. It carries out the reaction Cleavage of peptide bonds with very broad specificity.. Functionally, the proteasome is a multicatalytic proteinase complex which is characterized by its ability to cleave peptides with Arg, Phe, Tyr, Leu, and Glu adjacent to the leaving group at neutral or slightly basic pH. The proteasome has an ATP-dependent proteolytic activity. This chain is Proteasome subunit beta type-5-A (PBE1), found in Arabidopsis thaliana (Mouse-ear cress).